Consider the following 912-residue polypeptide: Transcription factor bHLH140 (912 aa).

The segment at 1-57 (MDDFNLRSENPNSSSTTSSSSSSFHRHKSETGNTKRSRSTSTLSTDPQSVAARDRRH) is disordered. A compositionally biased stretch (low complexity) spans 13–23 (SSSTTSSSSSS). The 50-residue stretch at 43 to 92 (LSTDPQSVAARDRRHRISDRFKILQSMVPGGAKMDTVSMLDEAISYVKFL) folds into the bHLH domain. 234 to 241 (GPPGSGKS) provides a ligand contact to ATP. The 180-residue stretch at 511 to 690 (KAKASQKNID…KYKGSQDKAV (180 aa)) folds into the Macro domain. Positions 657-666 (PKRSSQTAVS) are enriched in polar residues. The tract at residues 657 to 706 (PKRSSQTAVSDSGEDIKEDSERNKKYKGSQDKAVTNNLESESLEDTRGSG) is disordered. Positions 720-829 (LHSIAMHPER…SQDFNSDSLK (110 aa)) constitute an HIT domain. The C2H2-type zinc-finger motif lies at 870 to 893 (LRCNRCRSAHPNIPKLKSHVRSCH).

In terms of assembly, homodimer.

It is found in the nucleus. This Arabidopsis thaliana (Mouse-ear cress) protein is Transcription factor bHLH140 (BHLH140).